Consider the following 372-residue polypeptide: Histidinol-phosphate aminotransferase (372 aa).

The residue at position 229 (Lys-229) is an N6-(pyridoxal phosphate)lysine.

Belongs to the class-II pyridoxal-phosphate-dependent aminotransferase family. Histidinol-phosphate aminotransferase subfamily. Homodimer. The cofactor is pyridoxal 5'-phosphate.

The catalysed reaction is L-histidinol phosphate + 2-oxoglutarate = 3-(imidazol-4-yl)-2-oxopropyl phosphate + L-glutamate. It participates in amino-acid biosynthesis; L-histidine biosynthesis; L-histidine from 5-phospho-alpha-D-ribose 1-diphosphate: step 7/9. The chain is Histidinol-phosphate aminotransferase from Bdellovibrio bacteriovorus (strain ATCC 15356 / DSM 50701 / NCIMB 9529 / HD100).